Reading from the N-terminus, the 150-residue chain is Globin-3 (150 aa).

A Globin domain is found at 11–150; that stretch reads PLSAAEKTKI…MICILLRSAY (140 aa). Residues H74 and H106 each coordinate heme b.

Belongs to the globin family. As to quaternary structure, monomer.

The chain is Globin-3 from Petromyzon marinus (Sea lamprey).